A 403-amino-acid polypeptide reads, in one-letter code: Stearoyl-[acyl-carrier-protein] 9-desaturase 4, chloroplastic (403 aa).

The transit peptide at 1–44 directs the protein to the chloroplast; it reads MALLLNSTMTVAMKQNPATAVSFMQTTCLGSSFSPPRHLQVSCV. 6 residues coordinate Fe cation: Glu140, Glu178, His181, Glu231, Glu264, and His267.

The protein belongs to the fatty acid desaturase type 2 family. Homodimer. Fe(2+) is required as a cofactor. Preferentially expressed in roots.

It is found in the plastid. It localises to the chloroplast. The catalysed reaction is octadecanoyl-[ACP] + 2 reduced [2Fe-2S]-[ferredoxin] + O2 + 2 H(+) = (9Z)-octadecenoyl-[ACP] + 2 oxidized [2Fe-2S]-[ferredoxin] + 2 H2O. It participates in lipid metabolism; fatty acid metabolism. Its function is as follows. Converts stearoyl-ACP to oleoyl-ACP by introduction of a cis double bond between carbons 9 and 10 of the acyl chain. The polypeptide is Stearoyl-[acyl-carrier-protein] 9-desaturase 4, chloroplastic (S-ACP-DES4) (Arabidopsis thaliana (Mouse-ear cress)).